A 170-amino-acid polypeptide reads, in one-letter code: Interferon gamma (170 aa).

The first 20 residues, 1–20 (MNSRLCIMALLLCFSQALLG), serve as a signal peptide directing secretion. Asparagine 36 and asparagine 103 each carry an N-linked (GlcNAc...) asparagine glycan.

The protein belongs to the type II (or gamma) interferon family. Homodimer. Interacts with IFNGR1 (via extracellular domain); this interaction promotes IFNGR1 dimerization. In terms of tissue distribution, released primarily from activated T lymphocytes.

Its subcellular location is the secreted. In terms of biological role, type II interferon produced by immune cells such as T-cells and NK cells that plays crucial roles in antimicrobial, antiviral, and antitumor responses by activating effector immune cells and enhancing antigen presentation. Primarily signals through the JAK-STAT pathway after interaction with its receptor IFNGR1 to affect gene regulation. Upon IFNG binding, IFNGR1 intracellular domain opens out to allow association of downstream signaling components JAK2, JAK1 and STAT1, leading to STAT1 activation, nuclear translocation and transcription of IFNG-regulated genes. Many of the induced genes are transcription factors such as IRF1 that are able to further drive regulation of a next wave of transcription. Plays a role in class I antigen presentation pathway by inducing a replacement of catalytic proteasome subunits with immunoproteasome subunits. In turn, increases the quantity, quality, and repertoire of peptides for class I MHC loading. Increases the efficiency of peptide generation also by inducing the expression of activator PA28 that associates with the proteasome and alters its proteolytic cleavage preference. Up-regulates as well MHC II complexes on the cell surface by promoting expression of several key molecules such as cathepsins B/CTSB, H/CTSH, and L/CTSL. Participates in the regulation of hematopoietic stem cells during development and under homeostatic conditions by affecting their development, quiescence, and differentiation. This chain is Interferon gamma (IFNG), found in Sigmodon hispidus (Hispid cotton rat).